Here is a 1502-residue protein sequence, read N- to C-terminus: Heme-responsive zinc finger transcription factor HAP1 (1502 aa).

The segment covering 1 to 50 (MSNTPYNSSVPSIASMTQSSVSRSPNMHTATTPGANTSSNSPPLHMSSDS) has biased composition (polar residues). The interval 1–56 (MSNTPYNSSVPSIASMTQSSVSRSPNMHTATTPGANTSSNSPPLHMSSDSSKIKRK) is disordered. Residues C64, C67, C74, C81, C84, and C93 each coordinate Zn(2+). Positions 64–93 (CTICRKRKVKCDKLRPHCQQCTKTGVAHLC) form a DNA-binding region, zn(2)-C6 fungal-type. Residues 105 to 134 (EKELLKDNELKKLRERVKSLEKTLSKVHSS) are a coiled coil. The segment at 126–208 (KTLSKVHSSP…ANSSSLSISN (83 aa)) is disordered. Positions 130–142 (KVHSSPSSNSLKS) are enriched in low complexity. 2 stretches are compositionally biased toward polar residues: residues 143–152 (YNTPESSNLF) and 160–176 (TLVN…SHMH). Positions 177–208 (QQQQQQQQQEQQQDFSRSANANANSSSLSISN) are enriched in low complexity. The segment at 244–444 (KGDPYLKLLW…NTIPHHQPQS (201 aa)) is heme-responsive; required for HMC formation. 6 HRM repeats span residues 280 to 285 (KCPINH), 299 to 304 (KCPVDH), 323 to 328 (KCPVDH), 347 to 352 (RCPVDH), 389 to 394 (KCPVDH), and 415 to 420 (RCPIDH). Polar residues-rich tracts occupy residues 432-447 (STHN…SGSH) and 706-734 (QLNA…NPTL). Disordered stretches follow at residues 432 to 458 (STHN…SRKH) and 706 to 767 (QLNA…KENQ). Residues 735 to 759 (NNNMSAATTNSSSRSGSADSRSGSN) show a composition bias toward low complexity. One copy of the HRM 7 repeat lies at 1192-1197 (KCPVYQ). The interval 1384–1411 (TANTDTSANGSALSTLTSPQGSDLASNS) is disordered. Polar residues predominate over residues 1388-1411 (DTSANGSALSTLTSPQGSDLASNS).

As to quaternary structure, binds DNA as a homodimer. Interacts with SRO9 and YDJ1. In the absence of heme, binds to at least four cellular proteins, including YDJ1 and SRO9, forming a high-molecular-weight complex (HMC) which results in repression of its activity and dictates its DNA-binding specificity.

The protein localises to the nucleus. In terms of biological role, regulation of oxygen dependent gene expression. It modulates the expression of Iso-1 (CYP1) and Iso-2 (CYP3) cytochrome c. In response to heme, promotes transcription of genes encoding functions required for respiration, controlling oxidative damage and repression of anaerobic genes. Binds to the sequence 5'-CGGNNNTNNCGG-3'. Is non-functional in terms of iso-1 cytochrome c expression in strain S288c and its derivatives. This Saccharomyces cerevisiae (strain ATCC 204508 / S288c) (Baker's yeast) protein is Heme-responsive zinc finger transcription factor HAP1 (HAP1).